Reading from the N-terminus, the 395-residue chain is Flap endonuclease 1 (395 aa).

An N-domain region spans residues 1-104 (MGIKHLYQVI…GELAKRSARK (104 aa)). Position 34 (Asp34) interacts with Mg(2+). The DNA site is built by Arg47 and Arg70. A Mg(2+)-binding site is contributed by Asp86. A disordered region spans residues 99-126 (KRSARKREAHEAHEEAKETGTAEDMEKF). The interval 122–253 (DMEKFSRRTV…NTALKLIREH (132 aa)) is I-domain. Mg(2+)-binding residues include Glu158, Glu160, Asp179, and Asp181. Glu158 is a binding site for DNA. Gly231 and Asp233 together coordinate DNA. A Mg(2+)-binding site is contributed by Asp233. The tract at residues 341-349 (QQSRLEGFF) is interaction with PCNA. The segment covering 356–389 (EAEKASLKRKHDEKIEEQKKRKKEEAKAKKEAKA) has biased composition (basic and acidic residues). Positions 356-395 (EAEKASLKRKHDEKIEEQKKRKKEEAKAKKEAKARPRGAV) are disordered.

Belongs to the XPG/RAD2 endonuclease family. FEN1 subfamily. Interacts with PCNA. Three molecules of fen1 bind to one PCNA trimer with each molecule binding to one PCNA monomer. PCNA stimulates the nuclease activity without altering cleavage specificity. It depends on Mg(2+) as a cofactor. In terms of processing, phosphorylated. Phosphorylation upon DNA damage induces relocalization to the nuclear plasma.

It localises to the nucleus. It is found in the nucleolus. Its subcellular location is the nucleoplasm. The protein localises to the mitochondrion. Its function is as follows. Structure-specific nuclease with 5'-flap endonuclease and 5'-3' exonuclease activities involved in DNA replication and repair. During DNA replication, cleaves the 5'-overhanging flap structure that is generated by displacement synthesis when DNA polymerase encounters the 5'-end of a downstream Okazaki fragment. It enters the flap from the 5'-end and then tracks to cleave the flap base, leaving a nick for ligation. Also involved in the long patch base excision repair (LP-BER) pathway, by cleaving within the apurinic/apyrimidinic (AP) site-terminated flap. Acts as a genome stabilization factor that prevents flaps from equilibrating into structures that lead to duplications and deletions. Also possesses 5'-3' exonuclease activity on nicked or gapped double-stranded DNA, and exhibits RNase H activity. Also involved in replication and repair of rDNA and in repairing mitochondrial DNA. The sequence is that of Flap endonuclease 1 (fen1) from Talaromyces stipitatus (strain ATCC 10500 / CBS 375.48 / QM 6759 / NRRL 1006) (Penicillium stipitatum).